A 751-amino-acid polypeptide reads, in one-letter code: Collagen alpha-1(XIII) chain (751 aa).

The disordered stretch occupies residues 1-24 (MVAERTRKAAASGSRGPGELGAPG). Residues 1–40 (MVAERTRKAAASGSRGPGELGAPGPGTVALAEQCARLPSP) lie on the Cytoplasmic side of the membrane. The interval 1 to 119 (MVAERTRKAA…KMSPGCNCPP (119 aa)) is nonhelical region 1 (NC1). The span at 15-24 (RGPGELGAPG) shows a compositional bias: gly residues. A helical; Signal-anchor for type II membrane protein transmembrane segment spans residues 41–59 (GCCGLLALALCSLALSLLA). Residues 60–751 (HFRTAELQAR…GLPVQGCWNK (692 aa)) are Extracellular-facing. 3 disordered regions span residues 108–127 (APKM…PTGR), 190–225 (PGHP…EYPH), and 265–449 (TFQG…EMVD). Pro residues predominate over residues 116–125 (NCPPGPPGPT). The interval 120–223 (GPPGPTGRPG…KGEKGQCGEY (104 aa)) is triple-helical region 1 (COL1). A compositionally biased stretch (low complexity) spans 204–213 (PRGQPGPQGQ). Basic and acidic residues predominate over residues 214–225 (KGEKGQCGEYPH). A nonhelical region 2 (NC2) region spans residues 224 to 273 (PHREYPGGMLAALRSNPIMSLKLLPLLNSVRLAPPPVIKRRTFQGEQSQT). Residues 274–445 (GIQGPPGPPG…KGAKGEPGKG (172 aa)) form a triple-helical region 2 (COL2) region. Composition is skewed to pro residues over residues 278–288 (PPGPPGPPGPS), 296–312 (LPGP…PGPK), and 391–402 (PGPPGLPGPPGP). Positions 403–436 (KGEAGVDGQAGPPGQQGDKGQPGAAGEQGPSGPK) are enriched in low complexity. A compositionally biased stretch (basic and acidic residues) spans 438-447 (AKGEPGKGEM). The tract at residues 446 to 467 (EMVDYNGSINEALQEIRTLALM) is nonhelical region 3 (NC3). Asn451 carries an N-linked (GlcNAc...) asparagine glycan. A disordered region spans residues 466 to 751 (LMGPPGLPGQ…GLPVQGCWNK (286 aa)). The interval 468-733 (GPPGLPGQTG…KGDQGAPGLD (266 aa)) is triple-helical region 3 (COL3). The span at 470-484 (PGLPGQTGPPGPPGT) shows a compositional bias: pro residues. Composition is skewed to basic and acidic residues over residues 499-509 (HDGDKGPRGKP), 557-568 (TGEKGEPGDEGR), and 586-596 (EKGEAGEKGDP). Over residues 601–613 (PGPPGPEGPPGPP) the composition is skewed to pro residues. Low complexity predominate over residues 615–628 (LQGFPGPKGEAGLE). A compositionally biased stretch (basic and acidic residues) spans 630-643 (SKGEKGSQGEKGDR). A compositionally biased stretch (pro residues) spans 658–673 (PGPPGTPGPIGVPGPA). Residues 684 to 699 (DPGMTGPTGAAGLPGL) are compositionally biased toward low complexity. Residues 706 to 726 (KGNRGERGKKGSRGPKGDKGD) show a composition bias toward basic and acidic residues. The tract at residues 734-751 (APCPLGEDGLPVQGCWNK) is nonhelical region 4 (NC4).

As to quaternary structure, homotrimer; disulfide-linked. Nucleation of the type XIII collagen triple helix is likely to occur at the N-terminal region with triple helix formation proceeding from the N- to the C-terminus. Interacts with FN1, perlecan/HSPG2 and NID2.

It localises to the cell membrane. The protein localises to the postsynaptic cell membrane. Functionally, involved in cell-matrix and cell-cell adhesion interactions that are required for normal development. May participate in the linkage between muscle fiber and basement membrane. May play a role in endochondral ossification of bone and branching morphogenesis of lung. Binds heparin. At neuromuscular junctions, may play a role in acetylcholine receptor clustering. The polypeptide is Collagen alpha-1(XIII) chain (Mus musculus (Mouse)).